A 245-amino-acid chain; its full sequence is 1-(5-phosphoribosyl)-5-[(5-phosphoribosylamino)methylideneamino] imidazole-4-carboxamide isomerase (245 aa).

Residue aspartate 7 is the Proton acceptor of the active site. Aspartate 129 acts as the Proton donor in catalysis.

The protein belongs to the HisA/HisF family.

Its subcellular location is the cytoplasm. It carries out the reaction 1-(5-phospho-beta-D-ribosyl)-5-[(5-phospho-beta-D-ribosylamino)methylideneamino]imidazole-4-carboxamide = 5-[(5-phospho-1-deoxy-D-ribulos-1-ylimino)methylamino]-1-(5-phospho-beta-D-ribosyl)imidazole-4-carboxamide. The protein operates within amino-acid biosynthesis; L-histidine biosynthesis; L-histidine from 5-phospho-alpha-D-ribose 1-diphosphate: step 4/9. The polypeptide is 1-(5-phosphoribosyl)-5-[(5-phosphoribosylamino)methylideneamino] imidazole-4-carboxamide isomerase (Edwardsiella ictaluri (strain 93-146)).